The chain runs to 152 residues: Transcription factor ATOH7 (152 aa).

In terms of domain architecture, bHLH spans 40-92 (RRRLAANARERRRMQGLNTAFDRLRRVVPQWGQDKKLSKYETLQMALSYIMAL).

Forms a heterodimer with TCF3 isoform E47; interaction may be required for DNA-binding in certain situations.

It localises to the nucleus. Its subcellular location is the perikaryon. It is found in the cell projection. The protein localises to the axon. Transcription factor that binds to DNA at the consensus sequence 5'-CAG[GC]TG-3'. Dimerization with TCF3 isoform E47 may be required in certain situations. Binds to gene promoters and enhancer elements, and thereby regulates a transcriptional program of retinal ganglion cell (RGC) determinant genes. Although the exact mechanism is not certain, retinal transcription regulation by ATOH7 has a role in RGC determination and survival, photoreceptor population development, targeting of RGC axons to the optic nerve and development of the retino-hypothalamic tract. Binds to its own promoter and enhancer sequences, suggesting autoregulation of ATOH7 transcription. Required for retinal circadian rhythm photoentrainment. Plays a role in brainstem auditory signaling and binaural processing. The sequence is that of Transcription factor ATOH7 from Homo sapiens (Human).